The sequence spans 538 residues: Chaperonin GroEL 1 (538 aa).

Residues 29 to 32 (TLGP), 86 to 90 (DGTTT), G413, 478 to 480 (NAA), and D494 contribute to the ATP site.

Belongs to the chaperonin (HSP60) family. Forms a cylinder of 14 subunits composed of two heptameric rings stacked back-to-back. Interacts with the co-chaperonin GroES.

Its subcellular location is the cytoplasm. The enzyme catalyses ATP + H2O + a folded polypeptide = ADP + phosphate + an unfolded polypeptide.. Functionally, together with its co-chaperonin GroES, plays an essential role in assisting protein folding. The GroEL-GroES system forms a nano-cage that allows encapsulation of the non-native substrate proteins and provides a physical environment optimized to promote and accelerate protein folding. This chain is Chaperonin GroEL 1, found in Corynebacterium glutamicum (strain ATCC 13032 / DSM 20300 / JCM 1318 / BCRC 11384 / CCUG 27702 / LMG 3730 / NBRC 12168 / NCIMB 10025 / NRRL B-2784 / 534).